A 923-amino-acid chain; its full sequence is Alanine--tRNA ligase (923 aa).

His614, His618, Cys717, and His721 together coordinate Zn(2+). The segment at Lys884 to Ala903 is disordered. A compositionally biased stretch (gly residues) spans Val885–Pro901.

The protein belongs to the class-II aminoacyl-tRNA synthetase family. Zn(2+) is required as a cofactor.

The protein resides in the cytoplasm. The catalysed reaction is tRNA(Ala) + L-alanine + ATP = L-alanyl-tRNA(Ala) + AMP + diphosphate. Functionally, catalyzes the attachment of alanine to tRNA(Ala) in a two-step reaction: alanine is first activated by ATP to form Ala-AMP and then transferred to the acceptor end of tRNA(Ala). Also edits incorrectly charged Ser-tRNA(Ala) and Gly-tRNA(Ala) via its editing domain. In Haloquadratum walsbyi (strain DSM 16790 / HBSQ001), this protein is Alanine--tRNA ligase.